A 296-amino-acid polypeptide reads, in one-letter code: MKMENFEYELKMAIEHILETNYPRKAFWHFDDLIDDLKSGIKAGDDAVVIKNMVINMEGPYPLKLGAKTALIHTACDVVAMGAEPKFALNAIQAKNEDEIKLAVDGLRKQSIGLNIPIIGGNTQTVEELKSCISVAVFGELIDENLIIKDGGAKDGDLLIMLGDPVEGDVGERIYKAKKKFDTYLEILENGIKINACKDASRGGWLGNLLEMLIKAKKGAEIKSLPYPRATRYLGTYIIAVPEEEYEKVVDIALKNKCPVVLFGRILEKPKLIIGTKEYISENKMLELIKKFPYKY.

To Synechocystis PCC 6803 sll0787 and M.jannaschii MJ0640.

This is an uncharacterized protein from Methanocaldococcus jannaschii (strain ATCC 43067 / DSM 2661 / JAL-1 / JCM 10045 / NBRC 100440) (Methanococcus jannaschii).